A 251-amino-acid polypeptide reads, in one-letter code: Triosephosphate isomerase (251 aa).

Residue N9–K11 coordinates substrate. H94 serves as the catalytic Electrophile. E166 (proton acceptor) is an active-site residue. Substrate contacts are provided by residues G172, S211, and G232–G233.

This sequence belongs to the triosephosphate isomerase family. In terms of assembly, homodimer.

It is found in the cytoplasm. The catalysed reaction is D-glyceraldehyde 3-phosphate = dihydroxyacetone phosphate. The protein operates within carbohydrate biosynthesis; gluconeogenesis. It functions in the pathway carbohydrate degradation; glycolysis; D-glyceraldehyde 3-phosphate from glycerone phosphate: step 1/1. Its function is as follows. Involved in the gluconeogenesis. Catalyzes stereospecifically the conversion of dihydroxyacetone phosphate (DHAP) to D-glyceraldehyde-3-phosphate (G3P). The protein is Triosephosphate isomerase of Xanthomonas campestris pv. campestris (strain 8004).